Consider the following 162-residue polypeptide: NADH-quinone oxidoreductase subunit E (162 aa).

Positions 88, 93, 129, and 133 each coordinate [2Fe-2S] cluster.

The protein belongs to the complex I 24 kDa subunit family. In terms of assembly, composed of 13 different subunits. Subunits NuoCD, E, F, and G constitute the peripheral sector of the complex. Requires [2Fe-2S] cluster as cofactor.

It carries out the reaction a quinone + NADH + 5 H(+)(in) = a quinol + NAD(+) + 4 H(+)(out). Functionally, NDH-1 shuttles electrons from NADH, via FMN and iron-sulfur (Fe-S) centers, to quinones in the respiratory chain. Couples the redox reaction to proton translocation (for every two electrons transferred, four hydrogen ions are translocated across the cytoplasmic membrane), and thus conserves the redox energy in a proton gradient. The chain is NADH-quinone oxidoreductase subunit E (nuoE) from Buchnera aphidicola subsp. Acyrthosiphon pisum (strain APS) (Acyrthosiphon pisum symbiotic bacterium).